Reading from the N-terminus, the 115-residue chain is uncharacterized protein (115 aa).

This is an uncharacterized protein from Gallus gallus (Chicken).